The following is a 406-amino-acid chain: 4-hydroxy-3-methylbut-2-en-1-yl diphosphate synthase (ferredoxin) (406 aa).

[4Fe-4S] cluster contacts are provided by Cys314, Cys317, Cys348, and Glu355.

This sequence belongs to the IspG family. The cofactor is [4Fe-4S] cluster.

The catalysed reaction is (2E)-4-hydroxy-3-methylbut-2-enyl diphosphate + 2 oxidized [2Fe-2S]-[ferredoxin] + H2O = 2-C-methyl-D-erythritol 2,4-cyclic diphosphate + 2 reduced [2Fe-2S]-[ferredoxin] + H(+). It participates in isoprenoid biosynthesis; isopentenyl diphosphate biosynthesis via DXP pathway; isopentenyl diphosphate from 1-deoxy-D-xylulose 5-phosphate: step 5/6. Converts 2C-methyl-D-erythritol 2,4-cyclodiphosphate (ME-2,4cPP) into 1-hydroxy-2-methyl-2-(E)-butenyl 4-diphosphate. In Prochlorococcus marinus (strain MIT 9313), this protein is 4-hydroxy-3-methylbut-2-en-1-yl diphosphate synthase (ferredoxin).